We begin with the raw amino-acid sequence, 602 residues long: Sulfite reductase [NADPH] flavoprotein alpha-component (602 aa).

The Flavodoxin-like domain occupies isoleucine 68 to leucine 206. FMN-binding positions include serine 74 to alanine 79, serine 121 to glycine 124, and leucine 157 to cysteine 166. In terms of domain architecture, FAD-binding FR-type spans tyrosine 237–proline 451. FAD contacts are provided by residues threonine 325, lysine 359, arginine 389–serine 392, threonine 407–glycine 409, and glycine 422–serine 425. NADP(+) is bound by residues serine 522–arginine 523, lysine 528–glutamine 532, and aspartate 564. Residue tyrosine 602 participates in FAD binding.

Belongs to the NADPH-dependent sulphite reductase flavoprotein subunit CysJ family. It in the N-terminal section; belongs to the flavodoxin family. This sequence in the C-terminal section; belongs to the flavoprotein pyridine nucleotide cytochrome reductase family. In terms of assembly, alpha(8)-beta(8). The alpha component is a flavoprotein, the beta component is a hemoprotein. FAD serves as cofactor. Requires FMN as cofactor.

It catalyses the reaction hydrogen sulfide + 3 NADP(+) + 3 H2O = sulfite + 3 NADPH + 4 H(+). Its pathway is sulfur metabolism; hydrogen sulfide biosynthesis; hydrogen sulfide from sulfite (NADPH route): step 1/1. Functionally, component of the sulfite reductase complex that catalyzes the 6-electron reduction of sulfite to sulfide. This is one of several activities required for the biosynthesis of L-cysteine from sulfate. The flavoprotein component catalyzes the electron flow from NADPH -&gt; FAD -&gt; FMN to the hemoprotein component. This Buchnera aphidicola subsp. Schizaphis graminum (strain Sg) protein is Sulfite reductase [NADPH] flavoprotein alpha-component.